The following is a 568-amino-acid chain: Phosphoribosylaminoimidazole carboxylase (568 aa).

The ATP-grasp domain maps to 110-298; that stretch reads KNHLIKHDVA…QFEAHVRAVT (189 aa). 138-193 serves as a coordination point for ATP; the sequence is GEKFGYPYMLKSRTLAYDGRGNFVVKDKSYCEKALEFLKDRPLYAEKWCPFTKELA.

It in the C-terminal section; belongs to the AIR carboxylase family. Class I subfamily.

It catalyses the reaction 5-amino-1-(5-phospho-D-ribosyl)imidazole-4-carboxylate + H(+) = 5-amino-1-(5-phospho-beta-D-ribosyl)imidazole + CO2. The protein operates within purine metabolism; IMP biosynthesis via de novo pathway; 5-amino-1-(5-phospho-D-ribosyl)imidazole-4-carboxylate from 5-amino-1-(5-phospho-D-ribosyl)imidazole (carboxylase route): step 1/1. This Candida albicans (strain SC5314 / ATCC MYA-2876) (Yeast) protein is Phosphoribosylaminoimidazole carboxylase (ADE2).